A 253-amino-acid chain; its full sequence is NAD-dependent protein deacetylase (253 aa).

Residues 3–253 (APSLSSGVEQ…GETLGPFVGN (251 aa)) enclose the Deacetylase sirtuin-type domain. Residues A29, T33, F40, R41, Q106, I108, D109, and H126 each contribute to the NAD(+) site. F40 contributes to the nicotinamide binding site. Residues I108 and D109 each coordinate nicotinamide. The active-site Proton acceptor is H126. Positions 134, 137, 159, and 162 each coordinate Zn(2+). NAD(+) is bound by residues S200, S201, N225, D242, and I243.

This sequence belongs to the sirtuin family. Class U subfamily. Zn(2+) serves as cofactor.

Its subcellular location is the cytoplasm. The enzyme catalyses N(6)-acetyl-L-lysyl-[protein] + NAD(+) + H2O = 2''-O-acetyl-ADP-D-ribose + nicotinamide + L-lysyl-[protein]. Functionally, NAD-dependent protein deacetylase which modulates the activities of several enzymes which are inactive in their acetylated form. The polypeptide is NAD-dependent protein deacetylase (Rhodopseudomonas palustris (strain ATCC BAA-98 / CGA009)).